Reading from the N-terminus, the 143-residue chain is Alpha-amylase/trypsin inhibitor CM16 (143 aa).

The N-terminal stretch at 1-24 (MASKSNCVLLLAAVLVSIFAAVAA) is a signal peptide.

It belongs to the protease inhibitor I6 (cereal trypsin/alpha-amylase inhibitor) family. Subunit of the tetrameric inhibitor. In terms of processing, five disulfide bonds, which are essential for the inhibitor activity, are probably present. Developing endosperm.

It localises to the secreted. Alpha-amylase/trypsin inhibitor. It could be involved in insect defense mechanisms. In Triticum aestivum (Wheat), this protein is Alpha-amylase/trypsin inhibitor CM16.